The sequence spans 151 residues: Inactive oocyte-specific homeobox protein 2 (151 aa).

Residues Met1–Glu97 are disordered. Residues Met37–Ser54 are compositionally biased toward polar residues.

Belongs to the paired homeobox family. Obox subfamily. In terms of tissue distribution, specifically expressed in oocytes and early embryos.

In terms of biological role, in contrast to other Obox family proteins, displays a truncated homeobox domain and does not bind DNA. The chain is Inactive oocyte-specific homeobox protein 2 from Mus musculus (Mouse).